We begin with the raw amino-acid sequence, 65 residues long: Putative beta-neurotoxin RjAa2 (65 aa).

The LCN-type CS-alpha/beta domain occupies 1–64; the sequence is KEGYPMGRDG…VWDSSTNKCG (64 aa). Disulfide bonds link cysteine 11–cysteine 63, cysteine 15–cysteine 37, cysteine 22–cysteine 44, and cysteine 26–cysteine 46.

Belongs to the long (4 C-C) scorpion toxin superfamily. Sodium channel inhibitor family. Beta subfamily. In terms of tissue distribution, expressed by the venom gland.

Its subcellular location is the secreted. Beta toxins bind voltage-independently at site-4 of sodium channels (Nav) and shift the voltage of activation toward more negative potentials thereby affecting sodium channel activation and promoting spontaneous and repetitive firing. This is Putative beta-neurotoxin RjAa2 from Rhopalurus junceus (Caribbean blue scorpion).